A 548-amino-acid chain; its full sequence is Chaperonin GroEL (548 aa).

Residues 30 to 33 (TLGP), Lys51, 87 to 91 (DGTTT), Gly415, 479 to 481 (NAA), and Asp495 contribute to the ATP site.

This sequence belongs to the chaperonin (HSP60) family. As to quaternary structure, forms a cylinder of 14 subunits composed of two heptameric rings stacked back-to-back. Interacts with the co-chaperonin GroES.

The protein resides in the cytoplasm. It carries out the reaction ATP + H2O + a folded polypeptide = ADP + phosphate + an unfolded polypeptide.. Functionally, together with its co-chaperonin GroES, plays an essential role in assisting protein folding. The GroEL-GroES system forms a nano-cage that allows encapsulation of the non-native substrate proteins and provides a physical environment optimized to promote and accelerate protein folding. The sequence is that of Chaperonin GroEL from Sodalis glossinidius (strain morsitans).